The following is a 258-amino-acid chain: Thiazole synthase (258 aa).

Lys100 serves as the catalytic Schiff-base intermediate with DXP. 1-deoxy-D-xylulose 5-phosphate-binding positions include Gly161, 187–188 (AG), and 209–210 (NT).

It belongs to the ThiG family. Homotetramer. Forms heterodimers with either ThiH or ThiS.

It is found in the cytoplasm. It catalyses the reaction [ThiS sulfur-carrier protein]-C-terminal-Gly-aminoethanethioate + 2-iminoacetate + 1-deoxy-D-xylulose 5-phosphate = [ThiS sulfur-carrier protein]-C-terminal Gly-Gly + 2-[(2R,5Z)-2-carboxy-4-methylthiazol-5(2H)-ylidene]ethyl phosphate + 2 H2O + H(+). It participates in cofactor biosynthesis; thiamine diphosphate biosynthesis. In terms of biological role, catalyzes the rearrangement of 1-deoxy-D-xylulose 5-phosphate (DXP) to produce the thiazole phosphate moiety of thiamine. Sulfur is provided by the thiocarboxylate moiety of the carrier protein ThiS. In vitro, sulfur can be provided by H(2)S. This Campylobacter jejuni subsp. doylei (strain ATCC BAA-1458 / RM4099 / 269.97) protein is Thiazole synthase.